Consider the following 291-residue polypeptide: MPMSSLISLFRQHYPQGSLCCDLLEIDRGLYIVQASITLEGIVVASALAAQSPLEAAEDLAKERAIASLDLTHISSTVPQSSPTAIVEDMEAKPSPPPSSPKKESKSPKQNHKVVTPPAIVNPTPVTPAHPPTPVVEKSPEVEAAIAPEPTLTPAPISFPPSPDPVLSLEEPTPPPAMVNSTFNQPEESAPIDSELQLDFATPELPLAVEAKPDSPEPDMAVSGATELPAGPMDFSEIIARSNLELKRLGWTSDQGRNYLLQTYGKRSRQLLSDEQLIEFLAYLEQQPDPN.

Residues 77 to 140 (TVPQSSPTAI…PPTPVVEKSP (64 aa)) form a disordered region. Residues 125-134 (PVTPAHPPTP) show a composition bias toward pro residues.

This is an uncharacterized protein from Synechocystis sp. (strain ATCC 27184 / PCC 6803 / Kazusa).